We begin with the raw amino-acid sequence, 1071 residues long: Exportin-1 (1071 aa).

Positions 46 to 112 (AQEVLTHLKE…KKYVVGLIIK (67 aa)) constitute an Importin N-terminal domain. HEAT repeat units lie at residues 217–240 (QNAP…PLGY), 241–277 (IFET…VSVS), 354–472 (MLLV…YVDT), 515–553 (RFLV…QYPR), 560–597 (KFLK…KCRR), and 602–639 (VQVG…AVGY). The interval 327–450 (CTFLKEHGQL…VREFMKDTDS (124 aa)) is necessary for interaction with Ran and nuclear export complex formation. S391 carries the post-translational modification Phosphoserine. The segment at 411–481 (TVLSKVRLLM…TEIIMTKKLQ (71 aa)) is necessary for interaction with RANBP3. N6-acetyllysine is present on K446. T448 carries the post-translational modification Phosphothreonine. Position 450 is a phosphoserine (S450). Phosphotyrosine is present on Y454. N6-acetyllysine is present on K693. HEAT repeat units follow at residues 775–813 (NFVP…KLGG), 885–916 (TMRN…SFYQ), 917–954 (TYFC…NLVE), and 1002–1039 (FSLN…EERE). S1031 bears the Phosphoserine mark.

It belongs to the exportin family. In terms of assembly, found in a U snRNA export complex with PHAX/RNUXA, NCBP1/CBP80, NCBP2/CBP20, RAN, XPO1 and m7G-capped RNA. Component of a nuclear export receptor complex composed of KPNB1, RAN, SNUPN and XPO1. Found in a trimeric export complex with SNUPN, RAN and XPO1. Found in a nuclear export complex with RANBP3 and RAN. Found in a 60S ribosomal subunit export complex with NMD3, RAN, XPO1. Interacts with DDX3X, NMD3, NUP42, NUP88, NUP214, RANBP3 and TERT. Interacts with NEMF (via its N-terminus). Interacts with the monomeric form of BIRC5/survivin deacetylated at 'Lys-129'. Interacts with SERTAD2; the interaction translocates SERTAD2 out of the nucleus. Interacts with ATF2. Interacts with SLC35G1 and STIM1. Interacts with DCAF8. Interacts with DTNBP1 and the interaction translocates DTNBP1 out of the nucleus. Interacts with CPEB3. Interacts with HAX1. Interacts with BOK; translocates to the cytoplasm. Interacts with HSP90AB1. Interacts with LRPPRC; interacts with LRPPRC alone and also when LRPPRC is in complex with EIF4E and with EIF4E sensitivity element (4ESE)-containing mRNAs to form an EIF4E-dependent mRNA export complex.

The protein resides in the cytoplasm. The protein localises to the nucleus. It is found in the nucleoplasm. Its subcellular location is the cajal body. It localises to the nucleolus. Mediates the nuclear export of cellular proteins (cargos) bearing a leucine-rich nuclear export signal (NES) and of RNAs. In the nucleus, in association with RANBP3, binds cooperatively to the NES on its target protein and to the GTPase Ran in its active GTP-bound form. Docking of this complex to the nuclear pore complex (NPC) is mediated through binding to nucleoporins. Upon transit of a nuclear export complex into the cytoplasm, disassembling of the complex and hydrolysis of Ran-GTP to Ran-GDP (induced by RANBP1 and RANGAP1, respectively) cause release of the cargo from the export receptor. The directionality of nuclear export is thought to be conferred by an asymmetric distribution of the GTP- and GDP-bound forms of Ran between the cytoplasm and nucleus. Involved in U3 snoRNA transport from Cajal bodies to nucleoli. Binds to late precursor U3 snoRNA bearing a TMG cap. This is Exportin-1 (Xpo1) from Mus musculus (Mouse).